Here is a 475-residue protein sequence, read N- to C-terminus: Mitochondrial adenyl nucleotide antiporter SLC25A24 (475 aa).

A regulatory N-terminal domain region spans residues 1–173 (MLRWLRAFVL…RFWKHSTGID (173 aa)). At 1–197 (MLRWLRAFVL…EKKSGQWWRQ (197 aa)) the chain is on the mitochondrial intermembrane side. EF-hand domains are found at residues 19–54 (EPPT…LGIP), 55–88 (LGQD…KDHE), 86–121 (DHEK…LGLH), and 122–157 (ISEK…NPVT). Ca(2+) contacts are provided by aspartate 32, asparagine 34, aspartate 36, valine 38, glutamate 43, aspartate 68, asparagine 70, aspartate 72, lysine 74, glutamate 79, aspartate 99, asparagine 101, aspartate 103, lysine 105, glutamate 110, aspartate 135, aspartate 137, threonine 139, threonine 141, and glutamate 146. The tract at residues 159 to 168 (IEEIIRFWKH) is linker region. The C-terminal transmembrane transporter domain stretch occupies residues 174–475 (IGDSLTIPDE…MKQTLGVAQK (302 aa)). 3 Solcar repeats span residues 192 to 276 (GQWW…YKKL), 284 to 369 (LGTF…LKSY), and 381 to 469 (PGVM…MKQT). The chain crosses the membrane as a helical span at residues 198-215 (LLAGGVAGAVSRTSTAPL). Topologically, residues 216 to 250 (DRLKVMMQVHGSKSMNIFGGFRQMVKEGGIRSLWR) are mitochondrial matrix. A helical membrane pass occupies residues 251-270 (GNGTNVIKIAPETAVKFWAY). Over 271–293 (EQYKKLLTEEGQKLGTFERFISG) the chain is Mitochondrial intermembrane. Residues 294–307 (SMAGATAQTFIYPM) traverse the membrane as a helical segment. The Mitochondrial matrix portion of the chain corresponds to 308–343 (EVLKTRLAVAKTGQYSGIYGCAKKILKHEGFGAFYK). N6-acetyllysine; alternate is present on lysine 318. Lysine 318 carries the N6-succinyllysine; alternate modification. N6-acetyllysine is present on lysine 334. A helical transmembrane segment spans residues 344 to 363 (GYIPNLLGIIPYAGIDLAVY). Topologically, residues 364–386 (ELLKSYWLDNFAKDSVNPGVMVL) are mitochondrial intermembrane. Residues 387 to 404 (LSCGALSSTCGQLASYPL) form a helical membrane-spanning segment. At 405 to 443 (ALVRTRMQAQATVEGAPQLSMVGLFQRIVSKEGVSGLYR) the chain is on the mitochondrial matrix side. Lysine 435 carries the N6-acetyllysine; alternate modification. Lysine 435 is modified (N6-succinyllysine; alternate). Residues 444–463 (GITPNFMKVLPAVGISYVVY) form a helical membrane-spanning segment. At 464–475 (ENMKQTLGVAQK) the chain is on the mitochondrial intermembrane side.

The protein belongs to the mitochondrial carrier (TC 2.A.29) family. Monomer.

It is found in the mitochondrion inner membrane. The catalysed reaction is Mg(2+)(out) + phosphate(in) + ATP(out) = Mg(2+)(in) + phosphate(out) + ATP(in). It carries out the reaction ADP(out) + phosphate(in) + H(+)(out) = ADP(in) + phosphate(out) + H(+)(in). It catalyses the reaction AMP(out) + phosphate(in) = AMP(in) + phosphate(out). The enzyme catalyses phosphate(in) + ATP(out) + 2 H(+)(out) = phosphate(out) + ATP(in) + 2 H(+)(in). The catalysed reaction is dADP(in) + ADP(out) = dADP(out) + ADP(in). It carries out the reaction Mg(2+)(in) + ADP(out) + ATP(in) + H(+)(out) = Mg(2+)(out) + ADP(in) + ATP(out) + H(+)(in). It catalyses the reaction ADP(out) + diphosphate(in) = ADP(in) + diphosphate(out). The enzyme catalyses dAMP(in) + ADP(out) + H(+)(out) = dAMP(out) + ADP(in) + H(+)(in). The catalysed reaction is 3'-AMP(in) + ADP(out) + H(+)(out) = 3'-AMP(out) + ADP(in) + H(+)(in). It carries out the reaction dAMP(out) + phosphate(in) = dAMP(in) + phosphate(out). It catalyses the reaction 3'-AMP(out) + phosphate(in) = 3'-AMP(in) + phosphate(out). The enzyme catalyses dADP(out) + phosphate(in) + H(+)(out) = dADP(in) + phosphate(out) + H(+)(in). Its activity is regulated as follows. Activated by an increase in cytosolic calcium levels that induce a conformational change of the N-terminal regulatory domain, uncapping the channel and allowing transport. Inhibited by bathophenanthroline, mersalyl, p-hydroxymercuribenzoate, bromcresol purple and tannic acid. In terms of biological role, electroneutral antiporter that mediates the transport of adenyl nucleotides through the inner mitochondrial membrane. Originally identified as an ATP-magnesium/inorganic phosphate antiporter, it also acts as a broad specificity adenyl nucleotide antiporter. By regulating the mitochondrial matrix adenyl nucleotide pool could adapt to changing cellular energetic demands and indirectly regulate adenyl nucleotide-dependent metabolic pathways. In vitro, a low activity is also observed with guanyl and pyrimidine nucleotides. May play a role in protecting cells against oxidative stress-induced cell death, by buffering calcium levels in the mitochondrial matrix through the formation of calcium-phosphate precipitates. The sequence is that of Mitochondrial adenyl nucleotide antiporter SLC25A24 from Mus musculus (Mouse).